The following is a 203-amino-acid chain: Endothelin-1 (203 aa).

A signal peptide spans 1–25; that stretch reads MDYFPMIIALLFVAFQGAPETAVLG. Positions 26 to 50 are excised as a propeptide; sequence AELSPEAESQGETPSPHASWRPRRS. The disordered stretch occupies residues 27–48; sequence ELSPEAESQGETPSPHASWRPR. 2 disulfides stabilise this stretch: Cys53/Cys67 and Cys55/Cys63. The propeptide occupies 83–203; sequence YGLGSPSRSR…DKKVTHNRTH (121 aa). The endothelin-like stretch occupies residues 110–124; the sequence is CQCASQKDKKCWSFC. The N-linked (GlcNAc...) asparagine glycan is linked to Asn200.

Belongs to the endothelin/sarafotoxin family.

The protein localises to the secreted. Functionally, endothelins are endothelium-derived vasoconstrictor peptides. Probable ligand for G-protein coupled receptors EDNRA and EDNRB which activates PTK2B, BCAR1, BCAR3 and, GTPases RAP1 and RHOA cascade in glomerular mesangial cells. Also binds the DEAR/FBXW7-AS1 receptor. Promotes mesenteric arterial wall remodeling via activation of ROCK signaling and subsequent colocalization of NFATC3 with F-actin filaments. NFATC3 then translocates to the nucleus where it subsequently promotes the transcription of the smooth muscle hypertrophy and differentiation marker ACTA2. This is Endothelin-1 (EDN1) from Sus scrofa (Pig).